Consider the following 571-residue polypeptide: Putative clathrin assembly protein At2g01600 (571 aa).

An ENTH domain is found at 24 to 161 (RVNSEYADLD…ECFRVLKYDT (138 aa)). 2 disordered regions span residues 325-346 (YRPDDGLTTEDTEPSHEEREML) and 474-571 (PAPN…TGLI). The segment covering 337 to 346 (EPSHEEREML) has biased composition (basic and acidic residues). Low complexity predominate over residues 508–522 (QQTYQHQPQPTYQHQ). Polar residues-rich tracts occupy residues 523-532 (SNPPTNNSNP) and 543-571 (PVSQQPNTSGYGDFSVNQHNNPFRSTGLI).

Its subcellular location is the membrane. It localises to the clathrin-coated pit. It is found in the golgi apparatus. The protein localises to the cytoplasmic vesicle. The protein resides in the clathrin-coated vesicle. The sequence is that of Putative clathrin assembly protein At2g01600 from Arabidopsis thaliana (Mouse-ear cress).